The following is a 43-amino-acid chain: Potassium channel toxin gamma-KTx 4.3 (43 aa).

4 disulfide bridges follow: Cys5–Cys23, Cys11–Cys34, Cys20–Cys39, and Cys24–Cys41.

The protein belongs to the ergtoxin family. Gamma-KTx 4 subfamily. In terms of tissue distribution, expressed by the venom gland.

The protein resides in the secreted. Its function is as follows. Reversibly blocks Kv11/ERG potassium channels. This chain is Potassium channel toxin gamma-KTx 4.3, found in Centruroides exilicauda (Bark scorpion).